We begin with the raw amino-acid sequence, 221 residues long: Nucleolar protein 3 (221 aa).

The N-myristoyl glycine moiety is linked to residue G2. The 92-residue stretch at 4–95 (MQERPSETID…MPDPAWDWQH (92 aa)) folds into the CARD domain. The segment at 20–70 (VETLQADSGLLLDALVARGVLTGPEYEALDALPDAERRVRRLLLLVQSKGE) is essential for interaction with BAX. Residues 107–221 (PPCPGHWTPE…GDESEGCENT (115 aa)) form a disordered region. Acidic residues predominate over residues 132 to 143 (EEEEIGGPEDSE). T149 bears the Phosphothreonine; by CK2 mark. Acidic residues-rich tracts occupy residues 165–201 (PDLEQEMEPEPEPEVEPEPEPEPEPEPEPEPEPEPEP) and 209–221 (FQEGDESEGCENT).

Oligomerizes (via CARD doamin). Interacts (via CARD domain) with CASP2; inhibits CASP2 activity in a phosphorylation-dependent manner. Interacts with CASP8; decreases CASP8 activity in a mitochondria localization- and phosphorylation-dependent manner and this interaction is dissociated by calcium. Interacts with TFPT; translocates NOL3 into the nucleus and negatively regulated TFPT-induced cell death. Interacts directly (via CARD domain) with FAS and FADD (via DED domain); inhibits death-inducing signaling complex (DISC) assembly by inhibiting the increase in FAS-FADD binding induced by FAS activation. Interacts (via CARD domain) with BAX (via a C-terminal 33 residues); inhibits BAX activation and translocation and consequently cytochrome c release from mitochondria. Interacts with PPM1G; may dephosphorylate NOL3. Interacts (via CARD domain) with BBC3 (via BH3 domain); preventing the association of BBC3 with BCL2 and resulting in activation of CASP8. Interacts (via CARD domain) with BAD(via BH3 domain); preventing the association of BAD with BCL2. Interacts directly (via CARD domain) with TNFRSF1A; inhibits TNF-signaling pathway. Post-translationally, phosphorylation at Thr-149 is required for its antiapoptotic effect by blocking death-inducing signaling complex (DISC) activity through the control of interaction with CASP8. Phosphorylation at Thr-149 results in translocation to mitochondria and this translocation enables the binding to CASP8. Dephosphorylated at Thr-149 by calcineurin; doesn't inhibit the association between FADD and CASP8 and the consequent apoptosis. In terms of processing, polyubiquitinated by MDM2; promoting proteasomal-dependent degradation in response to apoptotic stimuli. As to expression, highly expressed in skeletal muscle, heart and medulla.

The protein resides in the cytoplasm. The protein localises to the mitochondrion. It is found in the sarcoplasmic reticulum. Its subcellular location is the membrane. Its function is as follows. Apoptosis repressor that blocks multiple modes of cell death. Inhibits extrinsic apoptotic pathways through two different ways. Firstly by interacting with FAS and FADD upon FAS activation blocking death-inducing signaling complex (DISC) assembly. Secondly by interacting with CASP8 in a mitochondria localization- and phosphorylation-dependent manner, limiting the amount of soluble CASP8 available for DISC-mediated activation. Inhibits intrinsic apoptotic pathway in response to a wide range of stresses, through its interaction with BAX resulting in BAX inactivation, preventing mitochondrial dysfunction and release of pro-apoptotic factors. Inhibits calcium-mediated cell death by functioning as a cytosolic calcium buffer, dissociating its interaction with CASP8 and maintaining calcium homeostasis. Negatively regulates oxidative stress-induced apoptosis by phosphorylation-dependent suppression of the mitochondria-mediated intrinsic pathway, by blocking CASP2 activation and BAX translocation. Negatively regulates hypoxia-induced apoptosis in part by inhibiting the release of cytochrome c from mitochondria in a caspase-independent manner. Also inhibits TNF-induced necrosis by preventing TNF-signaling pathway through TNFRSF1A interaction abrogating the recruitment of RIPK1 to complex I. Finally through its role as apoptosis repressor, promotes vascular remodeling through inhibition of apoptosis and stimulation of proliferation, in response to hypoxia. Inhibits too myoblast differentiation through caspase inhibition. The protein is Nucleolar protein 3 (Nol3) of Rattus norvegicus (Rat).